The following is a 244-amino-acid chain: HTH-type transcriptional regulator RdgA (244 aa).

The 54-residue stretch at 9–62 folds into the HTH cro/C1-type domain; sequence LKTARTAQGLSQKALGDMIGVSQAAIQKIEVGKASQTTKIVELSNNLRVRPEWL. Residues 20-39 constitute a DNA-binding region (H-T-H motif); the sequence is QKALGDMIGVSQAAIQKIEV.

Its function is as follows. Regulates pectin lyase production in response to DNA damage. This chain is HTH-type transcriptional regulator RdgA (rdgA), found in Pectobacterium carotovorum subsp. carotovorum (Erwinia carotovora subsp. carotovora).